Here is a 165-residue protein sequence, read N- to C-terminus: Xanthine-guanine phosphoribosyltransferase (165 aa).

5-phospho-alpha-D-ribose 1-diphosphate is bound by residues 41–42 and 98–106; these read RG and DDLTDTGKT. Position 99 (D99) interacts with Mg(2+). 2 residues coordinate guanine: D102 and I145. Xanthine-binding residues include D102 and I145. GMP is bound by residues 102-106 and 144-145; these read DTGKT and WI.

The protein belongs to the purine/pyrimidine phosphoribosyltransferase family. XGPT subfamily. As to quaternary structure, homotetramer. Mg(2+) is required as a cofactor.

It is found in the cell inner membrane. The catalysed reaction is GMP + diphosphate = guanine + 5-phospho-alpha-D-ribose 1-diphosphate. The enzyme catalyses XMP + diphosphate = xanthine + 5-phospho-alpha-D-ribose 1-diphosphate. It catalyses the reaction IMP + diphosphate = hypoxanthine + 5-phospho-alpha-D-ribose 1-diphosphate. The protein operates within purine metabolism; GMP biosynthesis via salvage pathway; GMP from guanine: step 1/1. Its pathway is purine metabolism; XMP biosynthesis via salvage pathway; XMP from xanthine: step 1/1. In terms of biological role, purine salvage pathway enzyme that catalyzes the transfer of the ribosyl-5-phosphate group from 5-phospho-alpha-D-ribose 1-diphosphate (PRPP) to the N9 position of the 6-oxopurines guanine and xanthine to form the corresponding ribonucleotides GMP (guanosine 5'-monophosphate) and XMP (xanthosine 5'-monophosphate), with the release of PPi. To a lesser extent, also acts on hypoxanthine. This Brucella anthropi (strain ATCC 49188 / DSM 6882 / CCUG 24695 / JCM 21032 / LMG 3331 / NBRC 15819 / NCTC 12168 / Alc 37) (Ochrobactrum anthropi) protein is Xanthine-guanine phosphoribosyltransferase.